We begin with the raw amino-acid sequence, 420 residues long: WD repeat-containing protein jip5 (420 aa).

6 WD repeats span residues 9-48 (PLSA…VDSD), 72-111 (RHKG…VENK), 117-158 (DKNG…SKVS), 221-262 (VSSV…DQDE), 271-314 (GGGE…VVSE), and 318-355 (DETE…GDGV). A disordered region spans residues 39-63 (RLPSDEVDSDDDGASTSSSRTGRGH). Residues 350 to 420 (DSGDGVNGNE…QAVMAFHDLD (71 aa)) are disordered. Residues 368–387 (DDSDEDSDDGDDDDDSGDSD) show a composition bias toward acidic residues. Over residues 394–406 (DARKKRKKGKTPK) the composition is skewed to basic residues.

The protein belongs to the WD repeat WDR55 family.

Its subcellular location is the nucleus. It is found in the nucleolus. The chain is WD repeat-containing protein jip5 (jip5) from Aspergillus terreus (strain NIH 2624 / FGSC A1156).